A 65-amino-acid polypeptide reads, in one-letter code: MTTSSERPETSVDRKLLEILVCPVTKGPLEFDAARQELISRGAKLAYPIRDGIPIMLPEEARKLG.

The protein belongs to the UPF0434 family.

In Rhodopseudomonas palustris (strain BisB5), this protein is UPF0434 protein RPD_0454.